We begin with the raw amino-acid sequence, 244 residues long: MFSLKMRASRNGNHVSGAERLVNEEKIEKISSELIKRAMSHENGVPDFINLKIEKVTEKINKLKHLEIKTVHSTSKENSRNIARNLLKNELEKYYLKNGKDIEKIDELIDFAFKIIDAGNMRGAAILDLDGNRLENILERGIRVKNIDTTEELSEKILKDSSLTKRTVDAIAIATKVVNCGVISELCTSDNFSYTTGYVATNDGYFRILNLKDKGQVGGRVFFVENSKIDELYDKLENMPVIVY.

This sequence belongs to the BioW family. In terms of assembly, homodimer. Requires Mg(2+) as cofactor.

It carries out the reaction heptanedioate + ATP + CoA = 6-carboxyhexanoyl-CoA + AMP + diphosphate. The protein operates within metabolic intermediate metabolism; pimeloyl-CoA biosynthesis; pimeloyl-CoA from pimelate: step 1/1. In terms of biological role, catalyzes the transformation of pimelate into pimeloyl-CoA with concomitant hydrolysis of ATP to AMP. The protein is 6-carboxyhexanoate--CoA ligase of Methanococcus maripaludis (strain C6 / ATCC BAA-1332).